The following is a 127-amino-acid chain: Ribonuclease P protein component (127 aa).

Belongs to the RnpA family. In terms of assembly, consists of a catalytic RNA component (M1 or rnpB) and a protein subunit.

The enzyme catalyses Endonucleolytic cleavage of RNA, removing 5'-extranucleotides from tRNA precursor.. Its function is as follows. RNaseP catalyzes the removal of the 5'-leader sequence from pre-tRNA to produce the mature 5'-terminus. It can also cleave other RNA substrates such as 4.5S RNA. The protein component plays an auxiliary but essential role in vivo by binding to the 5'-leader sequence and broadening the substrate specificity of the ribozyme. The chain is Ribonuclease P protein component from Agrobacterium fabrum (strain C58 / ATCC 33970) (Agrobacterium tumefaciens (strain C58)).